Here is a 164-residue protein sequence, read N- to C-terminus: UPF0178 protein RPD_2254 (164 aa).

The protein belongs to the UPF0178 family.

The sequence is that of UPF0178 protein RPD_2254 from Rhodopseudomonas palustris (strain BisB5).